The sequence spans 387 residues: Methylthioribose-1-phosphate isomerase (387 aa).

Asp257 serves as the catalytic Proton donor.

It belongs to the eIF-2B alpha/beta/delta subunits family. MtnA subfamily.

It localises to the cytoplasm. Its subcellular location is the nucleus. The catalysed reaction is 5-(methylsulfanyl)-alpha-D-ribose 1-phosphate = 5-(methylsulfanyl)-D-ribulose 1-phosphate. The protein operates within amino-acid biosynthesis; L-methionine biosynthesis via salvage pathway; L-methionine from S-methyl-5-thio-alpha-D-ribose 1-phosphate: step 1/6. Its function is as follows. Catalyzes the interconversion of methylthioribose-1-phosphate (MTR-1-P) into methylthioribulose-1-phosphate (MTRu-1-P). The chain is Methylthioribose-1-phosphate isomerase (mri1) from Neosartorya fischeri (strain ATCC 1020 / DSM 3700 / CBS 544.65 / FGSC A1164 / JCM 1740 / NRRL 181 / WB 181) (Aspergillus fischerianus).